The sequence spans 334 residues: Holliday junction branch migration complex subunit RuvB (334 aa).

The segment at 4 to 184 (ADRIISPNAT…FGIVQRLEFY (181 aa)) is large ATPase domain (RuvB-L). ATP contacts are provided by residues isoleucine 23, arginine 24, glycine 65, lysine 68, threonine 69, threonine 70, 131 to 133 (EDY), arginine 174, tyrosine 184, and arginine 221. Threonine 69 contacts Mg(2+). The tract at residues 185 to 255 (SVEDLRHIVA…VADKALNMLN (71 aa)) is small ATPAse domain (RuvB-S). The tract at residues 258–334 (LHGFDHMDRR…YNHFGLTMPE (77 aa)) is head domain (RuvB-H). DNA contacts are provided by arginine 313 and arginine 318.

The protein belongs to the RuvB family. As to quaternary structure, homohexamer. Forms an RuvA(8)-RuvB(12)-Holliday junction (HJ) complex. HJ DNA is sandwiched between 2 RuvA tetramers; dsDNA enters through RuvA and exits via RuvB. An RuvB hexamer assembles on each DNA strand where it exits the tetramer. Each RuvB hexamer is contacted by two RuvA subunits (via domain III) on 2 adjacent RuvB subunits; this complex drives branch migration. In the full resolvosome a probable DNA-RuvA(4)-RuvB(12)-RuvC(2) complex forms which resolves the HJ.

The protein localises to the cytoplasm. It carries out the reaction ATP + H2O = ADP + phosphate + H(+). Functionally, the RuvA-RuvB-RuvC complex processes Holliday junction (HJ) DNA during genetic recombination and DNA repair, while the RuvA-RuvB complex plays an important role in the rescue of blocked DNA replication forks via replication fork reversal (RFR). RuvA specifically binds to HJ cruciform DNA, conferring on it an open structure. The RuvB hexamer acts as an ATP-dependent pump, pulling dsDNA into and through the RuvAB complex. RuvB forms 2 homohexamers on either side of HJ DNA bound by 1 or 2 RuvA tetramers; 4 subunits per hexamer contact DNA at a time. Coordinated motions by a converter formed by DNA-disengaged RuvB subunits stimulates ATP hydrolysis and nucleotide exchange. Immobilization of the converter enables RuvB to convert the ATP-contained energy into a lever motion, pulling 2 nucleotides of DNA out of the RuvA tetramer per ATP hydrolyzed, thus driving DNA branch migration. The RuvB motors rotate together with the DNA substrate, which together with the progressing nucleotide cycle form the mechanistic basis for DNA recombination by continuous HJ branch migration. Branch migration allows RuvC to scan DNA until it finds its consensus sequence, where it cleaves and resolves cruciform DNA. This Hahella chejuensis (strain KCTC 2396) protein is Holliday junction branch migration complex subunit RuvB.